The following is a 285-amino-acid chain: Putative hydrolase DDAH2 (285 aa).

Catalysis depends on histidine 171, which acts as the Proton donor. Cysteine 276 (nucleophile) is an active-site residue.

This sequence belongs to the DDAH family. Post-translationally, phosphorylated by TBK1. Phosphorylation inhibits the translocation into the mitochondrion upon Sendai viral infection. In terms of tissue distribution, detected in heart, placenta, lung, liver, skeletal muscle, kidney and pancreas, and at very low levels in brain.

The protein resides in the cytoplasm. The protein localises to the mitochondrion. Putative hydrolase with unknown substrate. Does not hydrolyze N(G),N(G)-dimethyl-L-arginine (ADMA) which acts as an inhibitor of NOS. In endothelial cells, induces expression of vascular endothelial growth factor (VEGF) via phosphorylation of the transcription factor SP1 by PKA in a process that is independent of NO and NO synthase. Similarly, enhances pancreatic insulin secretion through SP1-mediated transcriptional up-regulation of secretagogin/SCGN, an insulin vesicle docking protein. Upon viral infection, relocates to mitochondria where it promotes mitochondrial fission through activation of DNM1L leading to the inhibition of innate response activation mediated by MAVS. In Homo sapiens (Human), this protein is Putative hydrolase DDAH2.